The sequence spans 206 residues: Phosphoserine phosphatase (206 aa).

The Nucleophile role is filled by D7. Residues D7 and D9 each contribute to the Mg(2+) site. Catalysis depends on D9, which acts as the Proton donor. Residues E16, R52, S95–G96, and K140 contribute to the substrate site. D163 serves as a coordination point for Mg(2+). N166 provides a ligand contact to substrate.

Belongs to the HAD-like hydrolase superfamily. SerB family. It depends on Mg(2+) as a cofactor.

It catalyses the reaction O-phospho-L-serine + H2O = L-serine + phosphate. The enzyme catalyses O-phospho-D-serine + H2O = D-serine + phosphate. It functions in the pathway amino-acid biosynthesis; L-serine biosynthesis; L-serine from 3-phospho-D-glycerate: step 3/3. The chain is Phosphoserine phosphatase from Wolinella succinogenes (strain ATCC 29543 / DSM 1740 / CCUG 13145 / JCM 31913 / LMG 7466 / NCTC 11488 / FDC 602W) (Vibrio succinogenes).